Here is a 465-residue protein sequence, read N- to C-terminus: tRNA-2-methylthio-N(6)-dimethylallyladenosine synthase (465 aa).

The region spanning 5–125 (RKLHIKSFGC…LPELLEKARR (121 aa)) is the MTTase N-terminal domain. Cys14, Cys50, Cys88, Cys166, Cys170, and Cys173 together coordinate [4Fe-4S] cluster. One can recognise a Radical SAM core domain in the interval 152–382 (RARGVSAFVT…QLQGLIDSQQ (231 aa)). In terms of domain architecture, TRAM spans 387 to 449 (RASIGTTVDV…RYSLIGELVK (63 aa)).

The protein belongs to the methylthiotransferase family. MiaB subfamily. In terms of assembly, monomer. Requires [4Fe-4S] cluster as cofactor.

It is found in the cytoplasm. It catalyses the reaction N(6)-dimethylallyladenosine(37) in tRNA + (sulfur carrier)-SH + AH2 + 2 S-adenosyl-L-methionine = 2-methylsulfanyl-N(6)-dimethylallyladenosine(37) in tRNA + (sulfur carrier)-H + 5'-deoxyadenosine + L-methionine + A + S-adenosyl-L-homocysteine + 2 H(+). Its function is as follows. Catalyzes the methylthiolation of N6-(dimethylallyl)adenosine (i(6)A), leading to the formation of 2-methylthio-N6-(dimethylallyl)adenosine (ms(2)i(6)A) at position 37 in tRNAs that read codons beginning with uridine. The protein is tRNA-2-methylthio-N(6)-dimethylallyladenosine synthase of Rhodopseudomonas palustris (strain BisA53).